The following is a 206-amino-acid chain: Protein sym1 (206 aa).

A run of 2 helical transmembrane segments spans residues 107-127 (VLLD…SWMT) and 169-189 (LQYQ…FLSL).

Belongs to the peroxisomal membrane protein PXMP2/4 family.

It localises to the mitochondrion inner membrane. This chain is Protein sym1 (sym1), found in Schizosaccharomyces pombe (strain 972 / ATCC 24843) (Fission yeast).